Here is a 309-residue protein sequence, read N- to C-terminus: Ribosomal RNA small subunit methyltransferase H (309 aa).

Residues 41 to 43 (GGH), aspartate 61, phenylalanine 85, aspartate 102, and glutamine 109 contribute to the S-adenosyl-L-methionine site.

It belongs to the methyltransferase superfamily. RsmH family.

The protein localises to the cytoplasm. It catalyses the reaction cytidine(1402) in 16S rRNA + S-adenosyl-L-methionine = N(4)-methylcytidine(1402) in 16S rRNA + S-adenosyl-L-homocysteine + H(+). Specifically methylates the N4 position of cytidine in position 1402 (C1402) of 16S rRNA. The polypeptide is Ribosomal RNA small subunit methyltransferase H (Albidiferax ferrireducens (strain ATCC BAA-621 / DSM 15236 / T118) (Rhodoferax ferrireducens)).